A 953-amino-acid chain; its full sequence is Nucleotide-binding oligomerization domain-containing protein 1 (953 aa).

Residues Gly15 to Ile107 enclose the CARD domain. Positions Glu196 to Ala531 constitute an NACHT domain. An ATP-binding site is contributed by Gly202–Ser209. Residues Cys558 and Cys567 are each lipidated (S-palmitoyl cysteine). LRR repeat units lie at residues Phe702–Pro725, Phe727–Glu750, Tyr755–Gln778, Cys783–Leu806, His839–Gln862, Asn867–Glu890, Asn895–Arg918, and Asn923–Asn946. The S-palmitoyl cysteine moiety is linked to residue Cys952.

Belongs to the NOD1-NOD2 family. As to quaternary structure, homooligomer: homooligomerizes following ligand-binding, promoting RIPK2 recruitment. Interacts (via CARD domain) with RIPK2 (via CARD domain). Following RIPK2 recruitment, RIPK2 homooligomerizes via its CARD domain and forms long filaments named RIPosomes. Interacts (via CARD domain) with ubiquitin; inhibiting interaction with RIPK2. Interacts with ARHGEF2. Interacts with NLRP10 and recruits it to the cell membrane following invasive bacterial infection. Interacts with IFIH1; this interaction promotes transcription of antiviral genes and inhibition of viral replication. Interacts with Irgm1; promoting NOD1 degradation. Interacts with ATG16L1. Post-translationally, ubiquitinated. 'Lys-48'-linked polyubiquitination by RNF34 promotes proteasomal degradation and thereby negatively regulates NOD1 for instance in NF-kappa-B activation. Palmitoylated. Palmitoylation is required for proper recruitment to the bacterial entry site and hence for proper signaling upon cognate peptidoglycan detection. In terms of processing, degraded via selective autophagy following interaction with Irgm1. Irgm1 promotes NOD1-RIPK2 RIPosome recruitment to autophagosome membranes, promoting their SQSTM1/p62-dependent autophagic degradation. As to expression, although ubiquitously expressed, NOD1 levels are more abundant in immune cells, the gastrointestinal tract, and adipose tissue.

The protein localises to the cell membrane. It localises to the apical cell membrane. Its subcellular location is the basolateral cell membrane. The protein resides in the cytoplasm. Pattern recognition receptor (PRR) that detects bacterial peptidoglycan fragments and other danger signals and thus participates in both innate and adaptive immune responses. Specifically recognizes and binds gamma-D-glutamyl-meso-diaminopimelic acid (iE-DAP), a dipeptide present in peptidoglycan of Gram-negative bacteria. Preferentially binds iE-DAP in tetrapeptide-containing muropeptides (MurNAc-TetraDAP or TetraDAP). Ligand binding triggers oligomerization that facilitates the binding and subsequent activation of the proximal adapter receptor-interacting RIPK2. Following recruitment, RIPK2 undergoes 'Met-1'- (linear) and 'Lys-63'-linked polyubiquitination by E3 ubiquitin-protein ligases XIAP, BIRC2, BIRC3 and the LUBAC complex, becoming a scaffolding protein for downstream effectors, triggering activation of the NF-kappa-B and MAP kinases signaling. This in turn leads to the transcriptional activation of hundreds of genes involved in immune response. Also acts as a regulator of antiviral response elicited by dsRNA and the expression of RLR pathway members by targeting IFIH1 and TRAF3 to modulate the formation of IFIH1-MAVS and TRAF3-MAVS complexes leading to increased transcription of type I IFNs. Also acts as a regulator of autophagy via its interaction with ATG16L1, possibly by recruiting ATG16L1 at the site of bacterial entry. Besides recognizing pathogens, also involved in the endoplasmic reticulum stress response: acts by sensing and binding to the cytosolic metabolite sphingosine-1-phosphate generated in response to endoplasmic reticulum stress, initiating an inflammation process that leads to activation of the NF-kappa-B and MAP kinases signaling. In addition, plays a role in insulin trafficking in beta cells in a cell-autonomous manner. Mechanistically, upon recognizing cognate ligands, NOD1 and RIPK2 localize to insulin vesicles where they recruit RAB1A to direct insulin trafficking through the cytoplasm. This is Nucleotide-binding oligomerization domain-containing protein 1 from Mus musculus (Mouse).